A 433-amino-acid chain; its full sequence is N-lysine methyltransferase SMYD2 (433 aa).

The 235-residue stretch at glycine 7–isoleucine 241 folds into the SET domain. S-adenosyl-L-methionine is bound at residue lysine 17–arginine 19. Zn(2+) contacts are provided by cysteine 52, cysteine 55, cysteine 65, cysteine 68, cysteine 74, cysteine 78, histidine 86, and cysteine 90. An MYND-type zinc finger spans residues cysteine 52–cysteine 90. S-adenosyl-L-methionine contacts are provided by residues histidine 137, asparagine 206 to histidine 207, and tyrosine 258 to phenylalanine 260.

This sequence belongs to the class V-like SAM-binding methyltransferase superfamily. As to quaternary structure, interacts with RNA polymerase II and HELZ. Interacts with SIN3A and HDAC1. Interacts (via MYND-type zinc finger) with EPB41L3. Interacts (via SET domain) with p53/TP53. Interacts with RB1 and HSP90AA1.

The protein resides in the cytoplasm. The protein localises to the cytosol. It localises to the nucleus. The enzyme catalyses L-lysyl(4)-[histone H3] + 3 S-adenosyl-L-methionine = N(6),N(6),N(6)-trimethyl-L-lysyl(4)-[histone H3] + 3 S-adenosyl-L-homocysteine + 3 H(+). It catalyses the reaction L-lysyl-[protein] + S-adenosyl-L-methionine = N(6)-methyl-L-lysyl-[protein] + S-adenosyl-L-homocysteine + H(+). Protein-lysine N-methyltransferase that methylates both histones and non-histone proteins, including p53/TP53 and RB1. Specifically trimethylates histone H3 'Lys-4' (H3K4me3) in vivo. The activity requires interaction with HSP90alpha. Shows even higher methyltransferase activity on p53/TP53. Monomethylates 'Lys-370' of p53/TP53, leading to decreased DNA-binding activity and subsequent transcriptional regulation activity of p53/TP53. Monomethylates RB1 at 'Lys-860'. The chain is N-lysine methyltransferase SMYD2 (SMYD2) from Bos taurus (Bovine).